A 357-amino-acid chain; its full sequence is tRNA pseudouridine synthase B (357 aa).

Aspartate 42 (nucleophile) is an active-site residue.

It belongs to the pseudouridine synthase TruB family. Type 1 subfamily.

It catalyses the reaction uridine(55) in tRNA = pseudouridine(55) in tRNA. In terms of biological role, responsible for synthesis of pseudouridine from uracil-55 in the psi GC loop of transfer RNAs. The polypeptide is tRNA pseudouridine synthase B (Treponema denticola (strain ATCC 35405 / DSM 14222 / CIP 103919 / JCM 8153 / KCTC 15104)).